A 476-amino-acid polypeptide reads, in one-letter code: Variant surface glycoprotein MITAT 1.2 (476 aa).

The signal sequence occupies residues 1–26 (MPSNQEARLFLAVLVLAQVLPILVDS). 2 disulfide bridges follow: C41–C171 and C149–C213. N-linked (GlcNAc...) asparagine glycosylation is present at N289. Disordered stretches follow at residues 389-418 (QKHK…CKSP) and 435-459 (EEAK…TGSS). Intrachain disulfides connect C407-C419 and C415-C430. Over residues 435 to 449 (EEAKKVADETAKDGK) the composition is skewed to basic and acidic residues. Over residues 450–459 (TGNTNTTGSS) the composition is skewed to low complexity. N454 carries N-linked (GlcNAc...) asparagine glycosylation. S459 is lipidated: GPI-anchor amidated serine. Positions 460–476 (NSFVISKTPLWLAVLLF) are cleaved as a propeptide — removed in mature form.

In terms of assembly, homodimer.

It localises to the cell membrane. VSG forms a coat on the surface of the parasite. The trypanosome evades the immune response of the host by expressing a series of antigenically distinct VSGs from an estimated 1000 VSG genes. This Trypanosoma brucei brucei protein is Variant surface glycoprotein MITAT 1.2.